We begin with the raw amino-acid sequence, 734 residues long: Predicted GPI-anchored protein 49 (734 aa).

Positions 1 to 16 are cleaved as a signal peptide; the sequence is MNYITSLLLLSSNTFL. 4 N-linked (GlcNAc...) asparagine glycosylation sites follow: Asn27, Asn56, Asn68, and Asn71. Residues 78-145 form a disordered region; that stretch reads DNSDTDIDDS…NESDTQNEND (68 aa). Residues 87–98 are compositionally biased toward low complexity; that stretch reads SSSNSEDVSSND. Asn105, Asn118, Asn136, and Asn180 each carry an N-linked (GlcNAc...) asparagine glycan. Residues 110-129 show a composition bias toward acidic residues; sequence FSDESDEGNDSDDNGDEVEN. Polar residues predominate over residues 130-141; that stretch reads MENNQANESDTQ. Disordered stretches follow at residues 216–262 and 331–360; these read SPKS…LKSK and DANP…RLPT. Positions 228–259 are enriched in basic residues; the sequence is SRKKTLKSKSKSKSSKLKHKSRKSHKRRPKLL. N-linked (GlcNAc...) asparagine glycans are attached at residues Asn388 and Asn427. Residues 447 to 479 are disordered; it reads PPRYSNHHSEFTVERPPRPSRTKKRPRIKAKKT. Residues 453–463 show a composition bias toward basic and acidic residues; it reads HHSEFTVERPP. Residues 464 to 479 are compositionally biased toward basic residues; sequence RPSRTKKRPRIKAKKT. A glycan (N-linked (GlcNAc...) asparagine) is linked at Asn517. Residues 582 to 653 form a disordered region; sequence KPQETKLHSP…STTSTKPNDQ (72 aa). A compositionally biased stretch (low complexity) spans 592–611; sequence TSTDTKSSKLMSSSSSNNNK. Positions 620–631 are enriched in polar residues; the sequence is EYNQTQESTSYN. Asn622 and Asn631 each carry an N-linked (GlcNAc...) asparagine glycan. The span at 632–650 shows a compositional bias: low complexity; it reads TTKAVPKTSVVSSTTSTKP. Ser707 is lipidated: GPI-anchor amidated serine. The propeptide at 708-734 is removed in mature form; the sequence is ASQNLSFSVLGLIILLLLLPGLLIIIM. N-linked (GlcNAc...) asparagine glycosylation is present at Asn711.

It is found in the cell membrane. In Candida albicans (strain SC5314 / ATCC MYA-2876) (Yeast), this protein is Predicted GPI-anchored protein 49 (PGA49).